The following is a 374-amino-acid chain: MNFNKLKFGDTIGIIGGGQLGKMMAQSAQKMGFKVICLDPNPDSPCKSVAHEFITAAYDDEEALHELGEKSDVITYEFENISAEQLIRLTQKFNIPQGYQAIQLLQDRLTEKQTLQKAGSKIVPFLPIKEEKDLNVVINQLGYPFIVKTRFGGYDGKGQVLVKNEESIQEAKDLISQQECVAEQFLDIALEVSLTVTIGNQKQITYFPLQENEHRNQILFKTIVPARSDKEQEARDEVNKIINEVHFVGTFTVEFFIDKSNNLYVNEIAPRPHNSGHYSIEACDYSQFDTHILAVTGQNLPKEIEILKPAVMMNLLGRDLDLLEDKFANHPEWHVHIYGKPERKPNRKMGHMTILTNNVDETEKAMLKQFEGRE.

ATP is bound by residues Arg108, Lys148, 153-159 (GYDGKGQ), 183-186 (EQFL), Glu191, His214, and 266-267 (NE). An ATP-grasp domain is found at 112–296 (KQTLQKAGSK…QFDTHILAVT (185 aa)).

Belongs to the PurK/PurT family. As to quaternary structure, homodimer.

It catalyses the reaction 5-amino-1-(5-phospho-beta-D-ribosyl)imidazole + hydrogencarbonate + ATP = 5-carboxyamino-1-(5-phospho-D-ribosyl)imidazole + ADP + phosphate + 2 H(+). The protein operates within purine metabolism; IMP biosynthesis via de novo pathway; 5-amino-1-(5-phospho-D-ribosyl)imidazole-4-carboxylate from 5-amino-1-(5-phospho-D-ribosyl)imidazole (N5-CAIR route): step 1/2. Functionally, catalyzes the ATP-dependent conversion of 5-aminoimidazole ribonucleotide (AIR) and HCO(3)(-) to N5-carboxyaminoimidazole ribonucleotide (N5-CAIR). The chain is N5-carboxyaminoimidazole ribonucleotide synthase from Staphylococcus haemolyticus (strain JCSC1435).